Consider the following 1083-residue polypeptide: FACT complex subunit spt16 (1083 aa).

At S437 the chain carries Phosphoserine. Residues 466-504 (LESKLRNEINTEEKRKEHQRELAQQLNERAKDRLARQGN) are a coiled coil. A disordered region spans residues 923 to 1083 (FEQGGWTFLD…NGHKSKKSRH (161 aa)). The span at 935 to 987 (SGSEGENETAESEEDEAYNPTDAESDEESDEDSEYSEASEDSEESDEDLGSDE) shows a compositional bias: acidic residues. Basic and acidic residues predominate over residues 988-1023 (ESGKDWSDLEREAAEEDRNHDYAADDKPRNGKFDSK). Over residues 1024-1033 (KHGKSSKHSP) the composition is skewed to basic residues. Basic and acidic residues predominate over residues 1058-1076 (SSKDKDRKRSRDDSRDNGH).

The protein belongs to the peptidase M24 family. SPT16 subfamily. Component of the FACT complex, a stable heterodimer of dre4/spt16 and Ssrp. Interacts with TRL/GAGA.

The protein resides in the nucleus. The protein localises to the chromosome. Component of the FACT complex, a general chromatin factor that acts to reorganize nucleosomes. The FACT complex is involved in multiple processes that require DNA as a template such as mRNA elongation, DNA replication and DNA repair. During transcription elongation the FACT complex acts as a histone chaperone that both destabilizes and restores nucleosomal structure. It facilitates the passage of RNA polymerase II and transcription by promoting the dissociation of one histone H2A-H2B dimer from the nucleosome, then subsequently promotes the reestablishment of the nucleosome following the passage of RNA polymerase II. The FACT complex is required for expression of Hox genes. This is FACT complex subunit spt16 (dre4) from Drosophila melanogaster (Fruit fly).